A 591-amino-acid chain; its full sequence is Probable auxin efflux carrier component 3b (591 aa).

At 1–6 the chain is on the extracellular side; it reads MISWHE. The helical transmembrane segment at 7–27 threads the bilayer; the sequence is LYMVLSAVVPLYVAMMVAYGS. Topologically, residues 28 to 38 are cytoplasmic; the sequence is VRWWGVLTPEQ. Residues 39–59 traverse the membrane as a helical segment; it reads CSGINRFVAVIAVPLLSFHFI. Val51 contributes to the (indol-3-yl)acetate binding site. Topologically, residues 60–70 are extracellular; sequence SSSDPYAMNLR. The helical transmembrane segment at 71–93 threads the bilayer; it reads FVAADTLQKVLVLAALAAWSRFP. The Cytoplasmic segment spans residues 94 to 107; the sequence is ARFVPPAWPPLDCS. Residues 108–128 form a helical membrane-spanning segment; that stretch reads ITLFSVSTLPNTLVMGIPLLV. (indol-3-yl)acetate-binding residues include Asn118 and Leu120. At 129–137 the chain is on the extracellular side; that stretch reads SMYGPYSGD. The helical transmembrane segment at 138-158 threads the bilayer; it reads LMVQIVVLQSIVWYTLLLFLF. Residue Tyr151 participates in (indol-3-yl)acetate binding. Residues 159–450 are Cytoplasmic-facing; it reads EFRAARVLIA…LIRNPNTYAS (292 aa). Polar residues-rich tracts occupy residues 243 to 254 and 283 to 292; these read SRNATPRGSTFT and SSSRQHTPRP. Disordered stretches follow at residues 243–269, 283–313, 344–374, and 392–420; these read SRNA…SALR, SSSR…APTN, ETRR…GERA, and AGAK…RARG. Positions 395-407 are enriched in low complexity; the sequence is KTEQQTTAVTTTT. A helical membrane pass occupies residues 451-471; it reads LIGLTWSLIAFRFHITMPIIV. Residues 472 to 474 lie on the Extracellular side of the membrane; it reads AKS. Residues 475–495 traverse the membrane as a helical segment; that stretch reads ISILSDAGLGMAMFSLGLFMA. At 496-511 the chain is on the cytoplasmic side; it reads TQPKIIACGYSVAAAS. Residues 512–532 form a helical membrane-spanning segment; it reads MGVRFFFGPAIMAAASAAVGI. At 533-535 the chain is on the extracellular side; the sequence is RGT. The chain crosses the membrane as a helical span at residues 536–556; it reads LLRIAIVQAALPQGIVPFVFA. Positions 550 and 551 each coordinate (indol-3-yl)acetate. Topologically, residues 557–568 are cytoplasmic; sequence KEYNLHATILCT. Residues 569 to 589 traverse the membrane as a helical segment; sequence LVIFGMLIALPITLVYYIILG. The Extracellular segment spans residues 590–591; sequence LL.

Belongs to the auxin efflux carrier (TC 2.A.69.1) family. Homodimer. As to expression, expressed in stem bases and leaves.

The protein resides in the membrane. May act as a component of the auxin efflux carrier. The protein is Probable auxin efflux carrier component 3b of Oryza sativa subsp. japonica (Rice).